The primary structure comprises 395 residues: ATP synthase subunit a (395 aa).

5 consecutive transmembrane segments (helical) span residues 153 to 173, 246 to 266, 273 to 293, 313 to 333, and 339 to 359; these read FTNP…LVYF, HFLI…IVGF, FLSF…LVLL, MMAG…MLCM, and FIGD…ELGV.

The protein belongs to the ATPase A chain family. As to quaternary structure, F-type ATPases have 2 components, CF(1) - the catalytic core - and CF(0) - the membrane proton channel. CF(1) has five subunits: alpha(3), beta(3), gamma(1), delta(1), epsilon(1). CF(0) has three main subunits: a, b and c.

It is found in the mitochondrion inner membrane. Functionally, mitochondrial membrane ATP synthase (F(1)F(0) ATP synthase or Complex V) produces ATP from ADP in the presence of a proton gradient across the membrane which is generated by electron transport complexes of the respiratory chain. F-type ATPases consist of two structural domains, F(1) - containing the extramembraneous catalytic core and F(0) - containing the membrane proton channel, linked together by a central stalk and a peripheral stalk. During catalysis, ATP synthesis in the catalytic domain of F(1) is coupled via a rotary mechanism of the central stalk subunits to proton translocation. Key component of the proton channel; it may play a direct role in the translocation of protons across the membrane. This is ATP synthase subunit a (ATP6) from Nicotiana tabacum (Common tobacco).